The following is a 39-amino-acid chain: Sarcotoxin-1C (39 aa).

Residue R39 is modified to Arginine amide.

The protein belongs to the cecropin family.

The protein resides in the secreted. In terms of biological role, sarcotoxins, which are potent bactericidal proteins, are produced in response to injury. They are cytotoxic to both Gram-positive and Gram-negative bacteria. In Sarcophaga peregrina (Flesh fly), this protein is Sarcotoxin-1C.